Reading from the N-terminus, the 130-residue chain is Small ribosomal subunit protein uS11 (130 aa).

The protein belongs to the universal ribosomal protein uS11 family. In terms of assembly, part of the 30S ribosomal subunit. Interacts with proteins S7 and S18. Binds to IF-3.

Located on the platform of the 30S subunit, it bridges several disparate RNA helices of the 16S rRNA. Forms part of the Shine-Dalgarno cleft in the 70S ribosome. The sequence is that of Small ribosomal subunit protein uS11 from Caldicellulosiruptor bescii (strain ATCC BAA-1888 / DSM 6725 / KCTC 15123 / Z-1320) (Anaerocellum thermophilum).